Reading from the N-terminus, the 208-residue chain is Uracil phosphoribosyltransferase (208 aa).

Residues Arg-78, Arg-103, and Asp-130–Ser-138 contribute to the 5-phospho-alpha-D-ribose 1-diphosphate site. Uracil contacts are provided by residues Ile-193 and Gly-198–Ala-200. Asp-199 lines the 5-phospho-alpha-D-ribose 1-diphosphate pocket.

This sequence belongs to the UPRTase family. Mg(2+) serves as cofactor.

The catalysed reaction is UMP + diphosphate = 5-phospho-alpha-D-ribose 1-diphosphate + uracil. It participates in pyrimidine metabolism; UMP biosynthesis via salvage pathway; UMP from uracil: step 1/1. Its activity is regulated as follows. Allosterically activated by GTP. In terms of biological role, catalyzes the conversion of uracil and 5-phospho-alpha-D-ribose 1-diphosphate (PRPP) to UMP and diphosphate. The protein is Uracil phosphoribosyltransferase of Shewanella piezotolerans (strain WP3 / JCM 13877).